Here is a 158-residue protein sequence, read N- to C-terminus: Phosphopantetheine adenylyltransferase (158 aa).

A substrate-binding site is contributed by Thr10. ATP contacts are provided by residues 10 to 11 (TF) and His18. The substrate site is built by Lys42, Leu74, and Arg88. ATP is bound by residues 89–91 (GLR), Glu99, and 124–130 (NSFISST).

This sequence belongs to the bacterial CoaD family. Homohexamer. Mg(2+) is required as a cofactor.

The protein localises to the cytoplasm. The catalysed reaction is (R)-4'-phosphopantetheine + ATP + H(+) = 3'-dephospho-CoA + diphosphate. It functions in the pathway cofactor biosynthesis; coenzyme A biosynthesis; CoA from (R)-pantothenate: step 4/5. Its function is as follows. Reversibly transfers an adenylyl group from ATP to 4'-phosphopantetheine, yielding dephospho-CoA (dPCoA) and pyrophosphate. This chain is Phosphopantetheine adenylyltransferase, found in Shewanella woodyi (strain ATCC 51908 / MS32).